The following is a 358-amino-acid chain: UPF0575 protein C19orf67 (358 aa).

The disordered stretch occupies residues 1 to 84; the sequence is MATEQWFEGS…PGPAPPRLSL (84 aa). Composition is skewed to pro residues over residues 17-32 and 70-80; these read ETPP…PPCG and PLVPRPGPAPP.

It belongs to the UPF0575 family.

This Homo sapiens (Human) protein is UPF0575 protein C19orf67 (C19orf67).